The following is a 129-amino-acid chain: Large ribosomal subunit protein bL20 (129 aa).

The protein belongs to the bacterial ribosomal protein bL20 family.

Functionally, binds directly to 23S ribosomal RNA and is necessary for the in vitro assembly process of the 50S ribosomal subunit. It is not involved in the protein synthesizing functions of that subunit. In Mycolicibacterium smegmatis (strain ATCC 700084 / mc(2)155) (Mycobacterium smegmatis), this protein is Large ribosomal subunit protein bL20.